The primary structure comprises 95 residues: Transcription and mRNA export factor ENY2-1 (95 aa).

This sequence belongs to the ENY2 family. As to quaternary structure, component of the nuclear pore complex (NPC)-associated TREX-2 complex (transcription and export complex 2). Component of the SAGA transcription coactivator-HAT complex. Within the SAGA complex, participates in a subcomplex of SAGA called the DUB module (deubiquitination module).

It localises to the nucleus. Its subcellular location is the nucleoplasm. Its function is as follows. Involved in mRNA export coupled transcription activation by association with both the TREX-2 and the SAGA complexes. The transcription regulatory histone acetylation (HAT) complex SAGA is a multiprotein complex that activates transcription by remodeling chromatin and mediating histone acetylation and deubiquitination. Within the SAGA complex, participates in a subcomplex that specifically deubiquitinates histones. The SAGA complex is recruited to specific gene promoters by activators, where it is required for transcription. The TREX-2 complex functions in docking export-competent ribonucleoprotein particles (mRNPs) to the nuclear entrance of the nuclear pore complex (nuclear basket). TREX-2 participates in mRNA export and accurate chromatin positioning in the nucleus by tethering genes to the nuclear periphery. The chain is Transcription and mRNA export factor ENY2-1 (eny2-1) from Salmo salar (Atlantic salmon).